The chain runs to 546 residues: uncharacterized protein (546 aa).

Belongs to the IIV-6 098R family.

This is an uncharacterized protein from Aedes vexans (Inland floodwater mosquito).